A 347-amino-acid chain; its full sequence is NHL repeat-containing protein 3 (347 aa).

The first 22 residues, 1 to 22, serve as a signal peptide directing secretion; sequence MARAWVCLAGAAFFLSCLVLHS. The stretch at 47-93 is one NHL 1 repeat; it reads RLDLGWPKNSEYFTGATFCVAVDSLNGLVYVAQRGDNIPKVLVFSED. Asn-101 carries an N-linked (GlcNAc...) asparagine glycan. NHL repeat units follow at residues 150–196 and 200–243; these read TPGK…LSQD and LWLR…FDKD. 2 N-linked (GlcNAc...) asparagine glycosylation sites follow: Asn-206 and Asn-278. An NHL 4 repeat occupies 294 to 338; that stretch reads GDCSVVSTIQLADQVLPHLLEVDRKTGAVYVAEIGAKQIQKYIPW.

In Mus musculus (Mouse), this protein is NHL repeat-containing protein 3 (Nhlrc3).